The primary structure comprises 331 residues: UPF0194 membrane protein YbhG (331 aa).

The signal sequence occupies residues 1 to 19 (MKKPVVIGLAIAAIVAVIA). The stretch at 107–208 (EEIAQAAAAV…LDLQDTTLIA (102 aa)) forms a coiled coil.

The protein belongs to the UPF0194 family.

The protein resides in the periplasm. The protein is UPF0194 membrane protein YbhG of Salmonella heidelberg (strain SL476).